The primary structure comprises 396 residues: Ribosomal RNA large subunit methyltransferase I (396 aa).

A PUA domain is found at 2-79 (AVRIKLKPGR…REEEIDREFF (78 aa)).

It belongs to the methyltransferase superfamily. RlmI family.

The protein localises to the cytoplasm. It carries out the reaction cytidine(1962) in 23S rRNA + S-adenosyl-L-methionine = 5-methylcytidine(1962) in 23S rRNA + S-adenosyl-L-homocysteine + H(+). In terms of biological role, specifically methylates the cytosine at position 1962 (m5C1962) of 23S rRNA. In Shewanella sp. (strain ANA-3), this protein is Ribosomal RNA large subunit methyltransferase I.